The primary structure comprises 137 residues: NADH-quinone oxidoreductase subunit A 2 (137 aa).

The next 3 membrane-spanning stretches (helical) occupy residues 12 to 32 (WGFA…LGVS), 66 to 86 (FYLV…LFAW), and 95 to 115 (WAGL…LVYL).

This sequence belongs to the complex I subunit 3 family. In terms of assembly, NDH-1 is composed of 13 different subunits. Subunits NuoA, H, J, K, L, M, N constitute the membrane sector of the complex.

Its subcellular location is the cell inner membrane. The catalysed reaction is a quinone + NADH + 5 H(+)(in) = a quinol + NAD(+) + 4 H(+)(out). Functionally, NDH-1 shuttles electrons from NADH, via FMN and iron-sulfur (Fe-S) centers, to quinones in the respiratory chain. The immediate electron acceptor for the enzyme in this species is believed to be ubiquinone. Couples the redox reaction to proton translocation (for every two electrons transferred, four hydrogen ions are translocated across the cytoplasmic membrane), and thus conserves the redox energy in a proton gradient. The sequence is that of NADH-quinone oxidoreductase subunit A 2 from Pseudomonas aeruginosa (strain ATCC 15692 / DSM 22644 / CIP 104116 / JCM 14847 / LMG 12228 / 1C / PRS 101 / PAO1).